Here is a 455-residue protein sequence, read N- to C-terminus: Golgi pH regulator (455 aa).

5 consecutive transmembrane segments (helical) span residues 5-25 (IDSS…WLFF), 46-66 (VTFA…LGVL), 79-99 (LCVI…YFIV), 114-134 (CLLW…FPIL), and 150-170 (VGVI…VNCP). Asn180 carries an N-linked (GlcNAc...) asparagine glycan. 4 helical membrane passes run 288 to 308 (FLGY…TINI), 343 to 363 (ISFI…LITL), 378 to 398 (VIVL…VLLI), and 425 to 445 (WFDV…YLAH).

This sequence belongs to the Golgi pH regulator (TC 1.A.38) family. As to quaternary structure, homotrimer. Interacts with RABL3; the interaction stabilizes GPR89.

It localises to the golgi apparatus membrane. The enzyme catalyses iodide(out) = iodide(in). It catalyses the reaction chloride(in) = chloride(out). It carries out the reaction bromide(in) = bromide(out). The catalysed reaction is fluoride(in) = fluoride(out). Functionally, voltage-gated channel that enables the transfer of monoatomic anions such as iodide, chloride, bromide and fluoride which may function in counter-ion conductance and participates in Golgi acidification. Plays a role in lymphocyte development, probably by acting as a RABL3 effector in hematopoietic cells. The polypeptide is Golgi pH regulator (Mus musculus (Mouse)).